The chain runs to 266 residues: tRNA pseudouridine synthase A (266 aa).

Asp55 serves as the catalytic Nucleophile. Position 110 (Tyr110) interacts with substrate.

This sequence belongs to the tRNA pseudouridine synthase TruA family.

It catalyses the reaction uridine(38/39/40) in tRNA = pseudouridine(38/39/40) in tRNA. Its function is as follows. Formation of pseudouridine at positions 38, 39 and 40 in the anticodon stem and loop of transfer RNAs. The protein is tRNA pseudouridine synthase A of Thermococcus sibiricus (strain DSM 12597 / MM 739).